An 85-amino-acid polypeptide reads, in one-letter code: Large ribosomal subunit protein bL31B (85 aa).

Belongs to the bacterial ribosomal protein bL31 family. Type B subfamily. In terms of assembly, part of the 50S ribosomal subunit.

The protein is Large ribosomal subunit protein bL31B of Micrococcus luteus (strain ATCC 4698 / DSM 20030 / JCM 1464 / CCM 169 / CCUG 5858 / IAM 1056 / NBRC 3333 / NCIMB 9278 / NCTC 2665 / VKM Ac-2230) (Micrococcus lysodeikticus).